A 272-amino-acid polypeptide reads, in one-letter code: Pyridoxal phosphate phosphatase YbhA (272 aa).

The Nucleophile role is filled by Asp-9. Position 9 (Asp-9) interacts with Mg(2+). Phosphate is bound at residue Leu-10. Mg(2+) is bound at residue Asp-11. Residues 43–44 (TG) and Lys-200 contribute to the phosphate site. Mg(2+) is bound at residue Asp-223. Asn-226 lines the phosphate pocket.

This sequence belongs to the HAD-like hydrolase superfamily. CbbY/CbbZ/Gph/YieH family. It depends on Mg(2+) as a cofactor. Mn(2+) is required as a cofactor. Co(2+) serves as cofactor. The cofactor is Zn(2+).

The catalysed reaction is pyridoxal 5'-phosphate + H2O = pyridoxal + phosphate. In terms of biological role, catalyzes the dephosphorylation of pyridoxal-phosphate (PLP). Can also hydrolyze erythrose-4-phosphate (Ery4P) and fructose-1,6-bis-phosphate (Fru1,6bisP). This Escherichia coli (strain K12) protein is Pyridoxal phosphate phosphatase YbhA (ybhA).